The chain runs to 104 residues: Complex III assembly factor LYRM7 (104 aa).

Position 60 is a phosphoserine (Ser-60).

Belongs to the complex I LYR family. Interacts with UQCRFS1.

Its subcellular location is the mitochondrion matrix. Its function is as follows. Assembly factor required for Rieske Fe-S protein UQCRFS1 incorporation into the cytochrome b-c1 (CIII) complex. Functions as a chaperone, binding to this subunit within the mitochondrial matrix and stabilizing it prior to its translocation and insertion into the late CIII dimeric intermediate within the mitochondrial inner membrane. The chain is Complex III assembly factor LYRM7 (LYRM7) from Pongo abelii (Sumatran orangutan).